The primary structure comprises 1412 residues: DNA-directed RNA polymerase subunit beta' (1412 aa).

4 residues coordinate Zn(2+): cysteine 71, cysteine 73, cysteine 86, and cysteine 89. The Mg(2+) site is built by aspartate 461, aspartate 463, and aspartate 465. Residues cysteine 815, cysteine 889, cysteine 896, and cysteine 899 each contribute to the Zn(2+) site.

It belongs to the RNA polymerase beta' chain family. The RNAP catalytic core consists of 2 alpha, 1 beta, 1 beta' and 1 omega subunit. When a sigma factor is associated with the core the holoenzyme is formed, which can initiate transcription. It depends on Mg(2+) as a cofactor. Requires Zn(2+) as cofactor.

It catalyses the reaction RNA(n) + a ribonucleoside 5'-triphosphate = RNA(n+1) + diphosphate. Its function is as follows. DNA-dependent RNA polymerase catalyzes the transcription of DNA into RNA using the four ribonucleoside triphosphates as substrates. This is DNA-directed RNA polymerase subunit beta' from Actinobacillus pleuropneumoniae serotype 5b (strain L20).